Consider the following 371-residue polypeptide: Cytochrome b (371 aa).

4 helical membrane-spanning segments follow: residues 25–45 (FGSM…FLAI), 69–90 (WIMQ…YTHI), 105–125 (WLSG…GYVL), and 170–190 (FFAL…IHII). Heme b is bound by residues His-75 and His-89. 2 residues coordinate heme b: His-174 and His-188. Residue His-193 coordinates a ubiquinone. 4 helical membrane-spanning segments follow: residues 218-238 (YKDT…LSFT), 280-300 (LGGT…PFTH), 312-332 (LAQT…WTAS), and 339-358 (FIII…IMNP).

This sequence belongs to the cytochrome b family. The cytochrome bc1 complex contains 3 respiratory subunits (MT-CYB, CYC1 and UQCRFS1), 2 core proteins (UQCRC1 and UQCRC2) and probably 6 low-molecular weight proteins. Requires heme b as cofactor.

Its subcellular location is the mitochondrion inner membrane. Component of the ubiquinol-cytochrome c reductase complex (complex III or cytochrome b-c1 complex) that is part of the mitochondrial respiratory chain. The b-c1 complex mediates electron transfer from ubiquinol to cytochrome c. Contributes to the generation of a proton gradient across the mitochondrial membrane that is then used for ATP synthesis. The polypeptide is Cytochrome b (MT-CYB) (Sinomicrurus macclellandi (Macclelland's coral snake)).